The chain runs to 324 residues: Probable fructokinase-5 (324 aa).

Belongs to the carbohydrate kinase PfkB family.

It carries out the reaction D-fructose + ATP = D-fructose 6-phosphate + ADP + H(+). Its pathway is glycan biosynthesis; starch biosynthesis. Its function is as follows. May play an important role in maintaining the flux of carbon towards starch formation. This is Probable fructokinase-5 from Arabidopsis thaliana (Mouse-ear cress).